Consider the following 393-residue polypeptide: Succinate--CoA ligase [ADP-forming] subunit beta (393 aa).

One can recognise an ATP-grasp domain in the interval 9–237 (RDLFAKHGVP…KDAANPLEAA (229 aa)). ATP-binding positions include Lys-45, 52-54 (GRG), Glu-92, Pro-95, and Glu-100. Positions 192 and 206 each coordinate Mg(2+). Substrate contacts are provided by residues Asn-257 and 319 to 321 (GIT).

The protein belongs to the succinate/malate CoA ligase beta subunit family. Heterotetramer of two alpha and two beta subunits. It depends on Mg(2+) as a cofactor.

It carries out the reaction succinate + ATP + CoA = succinyl-CoA + ADP + phosphate. The enzyme catalyses GTP + succinate + CoA = succinyl-CoA + GDP + phosphate. It participates in carbohydrate metabolism; tricarboxylic acid cycle; succinate from succinyl-CoA (ligase route): step 1/1. In terms of biological role, succinyl-CoA synthetase functions in the citric acid cycle (TCA), coupling the hydrolysis of succinyl-CoA to the synthesis of either ATP or GTP and thus represents the only step of substrate-level phosphorylation in the TCA. The beta subunit provides nucleotide specificity of the enzyme and binds the substrate succinate, while the binding sites for coenzyme A and phosphate are found in the alpha subunit. This chain is Succinate--CoA ligase [ADP-forming] subunit beta, found in Streptomyces griseus subsp. griseus (strain JCM 4626 / CBS 651.72 / NBRC 13350 / KCC S-0626 / ISP 5235).